The primary structure comprises 527 residues: Butyrophilin subfamily 2 member A1 (527 aa).

The first 28 residues, 1-28, serve as a signal peptide directing secretion; sequence MESAAALHFSRPASLLLLLLSLCALVSA. The 113-residue stretch at 29–141 folds into the Ig-like V-type domain; it reads QFIVVGPTDP…SYDEAILHLV (113 aa). Residues 29–248 lie on the Extracellular side of the membrane; sequence QFIVVGPTDP…SFMPSVSPCA (220 aa). N-linked (GlcNAc...) asparagine glycosylation is found at asparagine 46, asparagine 114, and asparagine 120. A disulfide bond links cysteine 51 and cysteine 125. Residues 249–269 traverse the membrane as a helical segment; it reads VALPIIVVILMIPIAVCIYWI. Over 270–527 the chain is Cytoplasmic; that stretch reads NKLQKEKKIL…LHRVGTHQSL (258 aa). The B30.2/SPRY domain occupies 310–506; it reads VKEKLQEELR…IFICPALTGA (197 aa).

The protein belongs to the immunoglobulin superfamily. BTN/MOG family. In terms of tissue distribution, highly expressed in brain, bone marrow, small intestine, muscle, spleen and pancreas. Moderate expression was seen in lung, liver and kidney.

It is found in the membrane. The polypeptide is Butyrophilin subfamily 2 member A1 (BTN2A1) (Homo sapiens (Human)).